The following is a 104-amino-acid chain: MAAKIRREDEVIVLTGKDKGKRGKVKQVLSSGKVIVEGINLVKKHQKPVPALNQPGGIVEKEAAIQVSNVAIFNAATGKADRVGFRFEDGKKVRFFKSNKETIK.

The protein belongs to the universal ribosomal protein uL24 family. In terms of assembly, part of the 50S ribosomal subunit.

Its function is as follows. One of two assembly initiator proteins, it binds directly to the 5'-end of the 23S rRNA, where it nucleates assembly of the 50S subunit. In terms of biological role, one of the proteins that surrounds the polypeptide exit tunnel on the outside of the subunit. This Proteus mirabilis (strain HI4320) protein is Large ribosomal subunit protein uL24.